The primary structure comprises 110 residues: MGQPLKVKKRIYSQDVELVRAHIFVRGKVQGVFFRQSMKDVANKYGVKGWVRNRRDGRTVEAVLEGPKDAVLKVIEWARVGPPGARVEDLEVKWEEYKGEFNDFSILPTE.

The Acylphosphatase-like domain maps to 20–108 (RAHIFVRGKV…GEFNDFSILP (89 aa)). Catalysis depends on residues arginine 35 and asparagine 53.

This sequence belongs to the acylphosphatase family.

It carries out the reaction an acyl phosphate + H2O = a carboxylate + phosphate + H(+). The sequence is that of Acylphosphatase (acyP) from Pyrobaculum calidifontis (strain DSM 21063 / JCM 11548 / VA1).